We begin with the raw amino-acid sequence, 163 residues long: HTH-type transcriptional regulator IscR (163 aa).

In terms of domain architecture, HTH rrf2-type spans 2-131 (RLTSKGRYAV…NNITLGELVN (130 aa)). Positions 28 to 51 (LADISERQGISLSYLEQLFSRLRK) form a DNA-binding region, H-T-H motif. [2Fe-2S] cluster-binding residues include C92, C98, and C104.

[2Fe-2S] cluster serves as cofactor.

Its function is as follows. Regulates the transcription of several operons and genes involved in the biogenesis of Fe-S clusters and Fe-S-containing proteins. This is HTH-type transcriptional regulator IscR from Klebsiella pneumoniae (strain 342).